Reading from the N-terminus, the 146-residue chain is Large ribosomal subunit protein uL15 (146 aa).

Positions 1-54 (MTIKLHDLRPAPGSKTPRTRVGRGEGSKGKTAGRGTKGTKARKQVPTTFEGGQM) are disordered.

It belongs to the universal ribosomal protein uL15 family. In terms of assembly, part of the 50S ribosomal subunit.

Functionally, binds to the 23S rRNA. The chain is Large ribosomal subunit protein uL15 from Mycobacterium ulcerans (strain Agy99).